Reading from the N-terminus, the 277-residue chain is MAIKSYKPYTPSRRYMTGLSSEDITAKPSVRSLLVKIPASGGRNNNGRITSRHKEAGAKKLYRIIDFKRKKFGIEGRVEAIEYDPNRNCRIALISYKDGEKRYIIRPNGLNVGDVIASIDEGALDIKPGNAMKLKFIPVGTIVHNIELKPGKGAQIARSAGGYAQLMGKEEKYVIVRMPSGEMRQILAECMASIGVVGNEDWANITIGKAGRNRYRGIRPQTRGSAMNPVDHPHGGGEGKKNSGRHPVTPWGKPTKGAKTRRKKASDKLIISRRKGK.

The segment at 219–277 is disordered; sequence RPQTRGSAMNPVDHPHGGGEGKKNSGRHPVTPWGKPTKGAKTRRKKASDKLIISRRKGK. A compositionally biased stretch (basic and acidic residues) spans 231–241; the sequence is DHPHGGGEGKK. Positions 256–277 are enriched in basic residues; that stretch reads KGAKTRRKKASDKLIISRRKGK.

This sequence belongs to the universal ribosomal protein uL2 family. Part of the 50S ribosomal subunit. Forms a bridge to the 30S subunit in the 70S ribosome.

Functionally, one of the primary rRNA binding proteins. Required for association of the 30S and 50S subunits to form the 70S ribosome, for tRNA binding and peptide bond formation. It has been suggested to have peptidyltransferase activity; this is somewhat controversial. Makes several contacts with the 16S rRNA in the 70S ribosome. The polypeptide is Large ribosomal subunit protein uL2 (Campylobacter curvus (strain 525.92)).